The following is a 319-amino-acid chain: Ribonucleoside-diphosphate reductase small chain (319 aa).

Positions 70, 101, and 104 each coordinate Fe cation. Tyr108 is an active-site residue. Positions 163, 197, and 200 each coordinate Fe cation. The interaction with R1 stretch occupies residues 313–319; that stretch reads FSLDVDF.

It belongs to the ribonucleoside diphosphate reductase small chain family. In terms of assembly, interacts with RNR1/OPG080 subunit. Can interact with host RNR1 supunit. Requires Fe cation as cofactor.

It carries out the reaction a 2'-deoxyribonucleoside 5'-diphosphate + [thioredoxin]-disulfide + H2O = a ribonucleoside 5'-diphosphate + [thioredoxin]-dithiol. Ribonucleoside-diphosphate reductase holoenzyme provides the precursors necessary for viral DNA synthesis. Allows virus growth in non-dividing cells. Catalyzes the biosynthesis of deoxyribonucleotides from the corresponding ribonucleotides. In Vaccinia virus (strain Copenhagen) (VACV), this protein is Ribonucleoside-diphosphate reductase small chain (OPG048).